The sequence spans 1595 residues: Collagen-like protein 2 (1595 aa).

2 N-linked (GlcNAc...) asparagine; by host glycosylation sites follow: asparagine 87 and asparagine 134. 4 Collagen-like domains span residues 97–155, 175–233, 236–295, and 299–358; these read LRGE…NGDV, QVGL…KGEG, GSKG…KGDI, and GIKG…KGMK. Positions 181 to 190 are enriched in low complexity; that stretch reads SQGDQGYKGD. Disordered regions lie at residues 181-577 and 604-1326; these read SQGD…SPDL and TDIK…GIKG. Composition is skewed to basic and acidic residues over residues 191 to 200, 209 to 448, 456 to 466, 474 to 501, 510 to 561, 606 to 615, 622 to 702, 718 to 825, 832 to 883, 895 to 1041, 1048 to 1098, 1107 to 1151, 1159 to 1250, and 1265 to 1300; these read QGSKGDKGQK, KGDK…KGTK, YKGDIGDKGIK, DKGDKGIKGDKGDKGIKGDDGSKGDKGY, DNGE…DKGE, IKGEKGDKGE, KGDK…DKGD, KGDK…DKGI, KGDK…KGFK, KGNK…DQGT, KGDK…KGIK, NKGD…KGDQ, and KGDKGDKGDKGDKGDKGDKGAKGDKGDKGDKGDQGI. Residues asparagine 274, asparagine 280, and asparagine 286 are each glycosylated (N-linked (GlcNAc...) asparagine; by host). Residues asparagine 373, asparagine 382, asparagine 400, and asparagine 409 are each glycosylated (N-linked (GlcNAc...) asparagine; by host). Collagen-like domains lie at 380–559, 608–907, 920–1039, 1043–1102, and 1128–1307; these read GDNG…KGDK, GEKG…KGEN, GDKG…KGDK, GTNG…KGET, and GDQG…SGAS. N-linked (GlcNAc...) asparagine; by host glycosylation is found at asparagine 1345, asparagine 1420, and asparagine 1545. The interval 1538–1585 is disordered; that stretch reads SAFDKGGNGSIRFNPPSSGTKGSGGGGSVQGGGGTIPNDGYPGGNGGP. The segment covering 1558-1585 has biased composition (gly residues); the sequence is KGSGGGGSVQGGGGTIPNDGYPGGNGGP.

May be hydroxylated on lysine by the viral-encoded procollagen-lysine,2-oxoglutarate 5-dioxygenase.

It is found in the virion. Functionally, may participate in the formation of a layer of cross-linked glycosylated fibrils at the viral surface thus giving it a hairy-like appearance. This chain is Collagen-like protein 2, found in Acanthamoeba polyphaga (Amoeba).